A 573-amino-acid chain; its full sequence is Methionine--tRNA ligase (573 aa).

A 'HIGH' region motif is present at residues 11–21 (PYINGIKHLGN). Positions 143, 146, 156, and 159 each coordinate Zn(2+). The 'KMSKS' region signature appears at 346-350 (QFSTS). Thr-349 provides a ligand contact to ATP.

Belongs to the class-I aminoacyl-tRNA synthetase family. MetG type 1 subfamily. Monomer. Zn(2+) serves as cofactor.

The protein localises to the cytoplasm. The enzyme catalyses tRNA(Met) + L-methionine + ATP = L-methionyl-tRNA(Met) + AMP + diphosphate. Is required not only for elongation of protein synthesis but also for the initiation of all mRNA translation through initiator tRNA(fMet) aminoacylation. The chain is Methionine--tRNA ligase from Ruegeria sp. (strain TM1040) (Silicibacter sp.).